The chain runs to 247 residues: Chymase (247 aa).

The signal sequence occupies residues 1–17 (MCLLSLPLLLFLQYTRA). Residues 18–21 (KAGE) constitute a propeptide, activation peptide. In terms of domain architecture, Peptidase S1 spans 22–245 (VIGGTECKPH…YRPWINKILK (224 aa)). Cysteines 51 and 67 form a disulfide. The Charge relay system role is filled by histidine 66. Asparagine 103 is a glycosylation site (N-linked (GlcNAc...) asparagine). Residue aspartate 110 is the Charge relay system of the active site. N-linked (GlcNAc...) asparagine glycosylation occurs at asparagine 121. Intrachain disulfides connect cysteine 144-cysteine 209 and cysteine 175-cysteine 188. Serine 203 functions as the Charge relay system in the catalytic mechanism.

Belongs to the peptidase S1 family. Granzyme subfamily.

The protein resides in the secreted. Its subcellular location is the cytoplasmic granule. The catalysed reaction is Preferential cleavage: Phe-|-Xaa &gt; Tyr-|-Xaa &gt; Trp-|-Xaa &gt; Leu-|-Xaa.. Functionally, major secreted protease of mast cells with suspected roles in vasoactive peptide generation, extracellular matrix degradation, and regulation of gland secretion. This chain is Chymase, found in Cavia porcellus (Guinea pig).